We begin with the raw amino-acid sequence, 405 residues long: 8-amino-7-oxononanoate synthase 1 (405 aa).

R29 contributes to the substrate binding site. 116–117 is a binding site for pyridoxal 5'-phosphate; sequence GY. H141 serves as a coordination point for substrate. 3 residues coordinate pyridoxal 5'-phosphate: S187, H215, and T247. K250 bears the N6-(pyridoxal phosphate)lysine mark. T368 lines the substrate pocket.

Belongs to the class-II pyridoxal-phosphate-dependent aminotransferase family. BioF subfamily. In terms of assembly, homodimer. It depends on pyridoxal 5'-phosphate as a cofactor.

It catalyses the reaction 6-carboxyhexanoyl-[ACP] + L-alanine + H(+) = (8S)-8-amino-7-oxononanoate + holo-[ACP] + CO2. It participates in cofactor biosynthesis; biotin biosynthesis. Functionally, catalyzes the decarboxylative condensation of pimeloyl-[acyl-carrier protein] and L-alanine to produce 8-amino-7-oxononanoate (AON), [acyl-carrier protein], and carbon dioxide. This chain is 8-amino-7-oxononanoate synthase 1, found in Polaromonas sp. (strain JS666 / ATCC BAA-500).